A 169-amino-acid chain; its full sequence is S-ribosylhomocysteine lyase (169 aa).

Fe cation contacts are provided by His-54, His-58, and Cys-128.

The protein belongs to the LuxS family. In terms of assembly, homodimer. Requires Fe cation as cofactor.

It catalyses the reaction S-(5-deoxy-D-ribos-5-yl)-L-homocysteine = (S)-4,5-dihydroxypentane-2,3-dione + L-homocysteine. Functionally, involved in the synthesis of autoinducer 2 (AI-2) which is secreted by bacteria and is used to communicate both the cell density and the metabolic potential of the environment. The regulation of gene expression in response to changes in cell density is called quorum sensing. Catalyzes the transformation of S-ribosylhomocysteine (RHC) to homocysteine (HC) and 4,5-dihydroxy-2,3-pentadione (DPD). This is S-ribosylhomocysteine lyase from Shewanella putrefaciens (strain CN-32 / ATCC BAA-453).